An 815-amino-acid chain; its full sequence is Sodium/hydrogen exchanger 1 (815 aa).

Over 1–98 (MVLRSGICGL…FPVLGIDYTH (98 aa)) the chain is Extracellular. O-linked (GalNAc...) threonine glycosylation is present at threonine 42. A disordered region spans residues 42 to 79 (TASTIRSSEPPRERSIGDVTTAPPEVTPESRPVNHSVT). O-linked (GalNAc...) serine glycosylation occurs at serine 56. O-linked (GalNAc...) threonine glycans are attached at residues threonine 61, threonine 62, and threonine 68. Asparagine 75 carries an N-linked (GlcNAc...) asparagine glycan. The chain crosses the membrane as a helical span at residues 99–121 (VRTPFEISLWILLACLMKIGFHV). At 122-130 (IPTISSIVP) the chain is on the cytoplasmic side. A helical membrane pass occupies residues 131–148 (ESCLLIVVGLLVGGLIKG). The Extracellular portion of the chain corresponds to 149-158 (VGETPPFLQS). Residues 159–176 (DVFFLFLLPPIILDAGYF) form a helical membrane-spanning segment. At 177 to 186 (LPLRQFTENL) the chain is on the cytoplasmic side. The chain crosses the membrane as a helical span at residues 187 to 215 (GTILIFAVVGTLWNAFFLGGLMYAVCLVG). Residues 216 to 222 (GEQINNI) lie on the Extracellular side of the membrane. The chain crosses the membrane as a helical span at residues 223–249 (GLLDNLLFGSIISAVDPVAVLAVFEEI). Topologically, residues 250–252 (HIN) are cytoplasmic. The chain crosses the membrane as a helical span at residues 253–283 (ELLHILVFGESLLNDAVTVVLYHLFEEFANY). Over 284–287 (EHVG) the chain is Extracellular. The helical transmembrane segment at 288–322 (IVDIFLGFLSFFVVALGGVLVGVVYGVIAAFTSRF) threads the bilayer. Topologically, residues 323–328 (TSHIRV) are cytoplasmic. A helical membrane pass occupies residues 329–341 (IEPLFVFLYSYMA). Residues 342–350 (YLSAELFHL) lie on the Extracellular side of the membrane. The chain crosses the membrane as a helical span at residues 351–371 (SGIMALIASGVVMRPYVEANI). Over 372–373 (SH) the chain is Cytoplasmic. A helical transmembrane segment spans residues 374 to 404 (KSHTTIKYFLKMWSSVSETLIFIFLGVSTVA). Residues 405–410 (GSHHWN) are Extracellular-facing. A helical transmembrane segment spans residues 411 to 438 (WTFVISTLLFCLIARVLGVLGLTWFINK). Over 439–444 (FRIVKL) the chain is Cytoplasmic. The chain crosses the membrane as a helical span at residues 445–469 (TPKDQFIIAYGGLRGAIAFSLGYLL). The Extracellular segment spans residues 470–475 (DKKHFP). The chain crosses the membrane as a helical span at residues 476–505 (MCDLFLTAIITVIFFTVFVQGMTIRPLVDL). Residues 503 to 545 (VDLLAVKKKQETKRSINEEIHTQFLDHLLTGIEDICGHYGHHH) form an interaction with TESC region. The Cytoplasmic portion of the chain corresponds to 506–815 (LAVKKKQETK…EGEPFFPKGQ (310 aa)). A PI(4,5)P2-binding region region spans residues 509–516 (KKKQETKR). The interval 515 to 545 (KRSINEEIHTQFLDHLLTGIEDICGHYGHHH) is interaction with CHP2. The confers pH-dependent PI(4,5)P2 binding stretch occupies residues 540-545 (HYGHHH). The PI(4,5)P2-binding region stretch occupies residues 552 to 560 (RFNKKYVKK). Serine 599 and serine 602 each carry phosphoserine. At threonine 603 the chain carries Phosphothreonine. Serine 605 and serine 648 each carry phosphoserine. The tract at residues 633–815 (KILRNNLQKT…EGEPFFPKGQ (183 aa)) is interaction with TESC. The tract at residues 633–815 (KILRNNLQKT…EGEPFFPKGQ (183 aa)) is interaction with CALM1. Positions 684-687 (LTVP) are interaction with PPP3CA. Serine 693, serine 697, and serine 703 each carry phosphoserine. The interaction with PPP3CA stretch occupies residues 715 to 720 (PVITID). Phosphoserine occurs at positions 723, 726, and 729. Residues 744–815 (LSRDPAKVAE…EGEPFFPKGQ (72 aa)) are disordered. The residue at position 779 (threonine 779) is a Phosphothreonine. A compositionally biased stretch (polar residues) spans 782 to 791 (PSDSPSSQRI). Serine 785, serine 787, and serine 796 each carry phosphoserine.

This sequence belongs to the monovalent cation:proton antiporter 1 (CPA1) transporter (TC 2.A.36) family. As to quaternary structure, homodimer; dimerization is crucial for its function. Oligomer. Interacts with CALM1 in a calcium-dependent manner. Interacts with TESC. Interacts (via the C-terminal domain) with CHP1; the interaction occurs at the plasma membrane in a calcium-dependent manner and facilitates the maturation, cell surface expression, and function of SLC9A3. Interacts with CHP2; the interaction occurs in a calcium-dependent manner. Interacts with EZR; regulates the cytoskeletal interactions of SLC9A1 and promotes stress fiber formation. Post-translationally, O-glycosylated. Ubiquitinated, leading to its degradation by the proteasome. Ubiquitination is reduced by CHP1. In terms of processing, phosphorylation at Thr-779 increases SLC9A1 activity. Specifically dephosphorylated at Thr-779 by PPP3CA that negatively regulates SLC9A1 activity. Phosphorylation at Ser-648 by AKT1 reduces SLC9A1 binding to CALM1. Post-translationally, palmitoylated; may play a major role in SLC9A1 regulation. In terms of tissue distribution, kidney and intestine.

It localises to the cell membrane. Its subcellular location is the basolateral cell membrane. The enzyme catalyses Na(+)(in) + H(+)(out) = Na(+)(out) + H(+)(in). The catalysed reaction is Li(+)(out) + H(+)(in) = Li(+)(in) + H(+)(out). It catalyses the reaction Li(+)(in) + Na(+)(out) = Li(+)(out) + Na(+)(in). Its activity is regulated as follows. Activated at acidic pHs. Inhibited by amiloride and 5-amino-substituted derivatives. Inhibited by cariporide and eniporide. Phosphatidylinositol 4,5-bisphosphate (PI(4,5)P2) and phosphatidylinositol 3,4,5-trisphosphate (PI(3,4,5)P3) bind and differentially regulate SLC9A1 activity. Its function is as follows. Electroneutral Na(+) /H(+) antiporter that extrudes Na(+) in exchange for external protons driven by the inward sodium ion chemical gradient, protecting cells from acidification that occurs from metabolism. Exchanges intracellular H(+) ions for extracellular Na(+) in 1:1 stoichiometry. Plays a key role in maintening intracellular pH neutral and cell volume, and thus is important for cell growth, proliferation, migration and survival. In addition, can transport lithium Li(+) and also functions as a Na(+)/Li(+) antiporter. SLC9A1 also functions in membrane anchoring and organization of scaffolding complexes that coordinate signaling inputs. The polypeptide is Sodium/hydrogen exchanger 1 (Homo sapiens (Human)).